The sequence spans 163 residues: Cyanate hydratase (163 aa).

Catalysis depends on residues Arg103, Glu106, and Ser129.

Belongs to the cyanase family.

The enzyme catalyses cyanate + hydrogencarbonate + 3 H(+) = NH4(+) + 2 CO2. Functionally, catalyzes the reaction of cyanate with bicarbonate to produce ammonia and carbon dioxide. The chain is Cyanate hydratase from Talaromyces stipitatus (strain ATCC 10500 / CBS 375.48 / QM 6759 / NRRL 1006) (Penicillium stipitatum).